We begin with the raw amino-acid sequence, 129 residues long: Protein Turandot C (129 aa).

The first 21 residues, 1 to 21 (MNASISLLCFALLLISPFCLG), serve as a signal peptide directing secretion.

Belongs to the Turandot family.

It localises to the secreted. In terms of biological role, a humoral factor that may play a role in stress tolerance. The protein is Protein Turandot C of Drosophila sechellia (Fruit fly).